The chain runs to 533 residues: Flavin-containing monooxygenase 5 (533 aa).

Arg5 carries the dimethylated arginine modification. Residues 10-14 (GAGAS), Glu33, and 41-42 (LW) contribute to the FAD site. A Phosphoserine modification is found at Ser54. Tyr56 is modified (phosphotyrosine). A Phosphoserine modification is found at Ser58. An FAD-binding site is contributed by 62-63 (NT). NADP(+) is bound at residue 196-199 (SGGD). At Ser280 the chain carries Phosphoserine. Thr284 bears the Phosphothreonine mark. Ser401 is modified (phosphoserine). A helical transmembrane segment spans residues 513-533 (MMTMGKFMLAIAFLAIAVVYF).

The protein belongs to the FMO family. FAD is required as a cofactor. As to expression, kidney and liver.

The protein resides in the microsome membrane. The protein localises to the endoplasmic reticulum membrane. The catalysed reaction is N,N-dimethylaniline + NADPH + O2 + H(+) = N,N-dimethylaniline N-oxide + NADP(+) + H2O. It catalyses the reaction NADPH + O2 + H(+) = H2O2 + NADP(+). It carries out the reaction heptan-2-one + NADPH + O2 + H(+) = pentyl acetate + NADP(+) + H2O. The enzyme catalyses octan-3-one + NADPH + O2 + H(+) = pentyl propanoate + NADP(+) + H2O. The catalysed reaction is octan-3-one + NADPH + O2 + H(+) = ethyl hexanoate + NADP(+) + H2O. It catalyses the reaction hexan-3-one + NADPH + O2 + H(+) = ethyl butanoate + NADP(+) + H2O. It carries out the reaction hexan-3-one + NADPH + O2 + H(+) = propyl propanoate + NADP(+) + H2O. The enzyme catalyses heptan-4-one + NADPH + O2 + H(+) = propyl butanoate + NADP(+) + H2O. The catalysed reaction is (2E)-geranial + NADPH + O2 + H(+) = (1E)-2,6-dimethylhepta-1,5-dien-1-yl formate + NADP(+) + H2O. It catalyses the reaction sulcatone + NADPH + O2 + H(+) = 4-methylpent-3-en-1-yl acetate + NADP(+) + H2O. Acts as a Baeyer-Villiger monooxygenase on a broad range of substrates. Catalyzes the insertion of an oxygen atom into a carbon-carbon bond adjacent to a carbonyl, which converts ketones to esters. Active on diverse carbonyl compounds, whereas soft nucleophiles are mostly non- or poorly reactive. In contrast with other forms of FMO it is non- or poorly active on 'classical' substrates such as drugs, pesticides, and dietary components containing soft nucleophilic heteroatoms. Able to oxidize drug molecules bearing a carbonyl group on an aliphatic chain, such as nabumetone and pentoxifylline. Also, in the absence of substrates, shows slow but yet significant NADPH oxidase activity. Acts as a positive modulator of cholesterol biosynthesis as well as glucose homeostasis, promoting metabolic aging via pleiotropic effects. The chain is Flavin-containing monooxygenase 5 (FMO5) from Oryctolagus cuniculus (Rabbit).